Reading from the N-terminus, the 558-residue chain is MSRRTDSLCLDEYLSSELKKRTHILECAWNQEHDDDEEEEEVKVDQGSEETTSSHDIYGDVGKRAPNEFEKIDRLTTIKVYIAWLALFVFAHIREYVTRFGFVKDLSSKENAKMKDFVPLFSDFEAFYQRNCYIKVRDVFERPICSVPGATVDLVDRVSHDGNWTYEYPGTRTNVINVGSYNYLGFAQSAGPCAEQSASSIDREGLSCCTTVHERGRSVSQAKLEKLVAEFLGVEDAICFSMGFATNSMNAPCLVDKHSLIISDKYNHASLILGCRLSGASTKVFEHNDMESLERILRDAIAYGNPKTHRPYKKILIIVEGIYSMEGSICNLPGIIALKKKYQAYLYLDEAHSIGAMGKTGKGVVEYWGCDPKDVDILMGTFTKSFGAAGGYIAGSKRTVDHLRAASPTGYYSSPMSPPIAQQIYTSMSIIMGKDGTKDGAQRIERLARNSHYFRMKLKQNGFIVYGSNDSPVVPMLIYFPTMCGFYGREMLARNIGCVVVSFPATHMTEGRVRFCISAAHTKEQLDEVLETVNLLGSMSRSKFSKRSHLYKNQKIEW.

The segment covering 33–42 (HDDDEEEEEV) has biased composition (acidic residues). The segment at 33 to 57 (HDDDEEEEEVKVDQGSEETTSSHDI) is disordered. K384 is subject to N6-(pyridoxal phosphate)lysine.

It belongs to the class-II pyridoxal-phosphate-dependent aminotransferase family. As to quaternary structure, heterodimer of sptl-1/sptl-2. It depends on pyridoxal 5'-phosphate as a cofactor.

The catalysed reaction is L-serine + hexadecanoyl-CoA + H(+) = 3-oxosphinganine + CO2 + CoA. It participates in lipid metabolism; sphingolipid metabolism. Its function is as follows. Component of the serine palmitoyltransferase (SPT) that catalyzes the first committed step in sphingolipid biosynthesis, which is the condensation of an acyl-CoA species and L-serine. The catalytic core is composed of a heterodimer of sptl-1 and sptl-2 or sptl-1 and sptl-3. Required for the specification of abicobasal polarity and development of the gut lumen. The protein is Serine palmitoyltransferase 2 (sptl-2) of Caenorhabditis elegans.